Here is a 379-residue protein sequence, read N- to C-terminus: Anthranilate O-methyltransferase 3 (379 aa).

Residues 1 to 10 (MPMRIERDLH) show a composition bias toward basic and acidic residues. A disordered region spans residues 1-21 (MPMRIERDLHMATGNGETSYT). Tyr20 provides a ligand contact to S-adenosyl-L-homocysteine. Gln27 is an anthranilate binding site. The S-adenosyl-L-homocysteine site is built by Cys61, Asn66, Asp100, Leu101, Ser143, and Phe144. 2 residues coordinate anthranilate: His164 and Trp165. Mg(2+) is bound by residues Glu265 and Phe267.

Belongs to the methyltransferase superfamily. Type-7 methyltransferase family. SABATH subfamily.

The enzyme catalyses anthranilate + S-adenosyl-L-methionine = O-methyl anthranilate + S-adenosyl-L-homocysteine. It carries out the reaction benzoate + S-adenosyl-L-methionine = methyl benzoate + S-adenosyl-L-homocysteine. The catalysed reaction is salicylate + S-adenosyl-L-methionine = methyl salicylate + S-adenosyl-L-homocysteine. Functionally, methyltransferase involved in the biosynthesis of methyl anthranilate in response to stresses. Utilizes anthranilic acid as substrate. Produces exclusively the O-methyl ester. Can also use benzoic acid as substrate. Low activity with salicylic acid. The polypeptide is Anthranilate O-methyltransferase 3 (AAMT3) (Zea mays (Maize)).